Reading from the N-terminus, the 209-residue chain is Probable GTP-binding protein EngB (209 aa).

The 177-residue stretch at 22-198 (TPLEIAFVGR…NRTVGSWFDA (177 aa)) folds into the EngB-type G domain. Residues S37 and T59 each coordinate Mg(2+).

The protein belongs to the TRAFAC class TrmE-Era-EngA-EngB-Septin-like GTPase superfamily. EngB GTPase family. Mg(2+) is required as a cofactor.

Its function is as follows. Necessary for normal cell division and for the maintenance of normal septation. In Neisseria gonorrhoeae (strain ATCC 700825 / FA 1090), this protein is Probable GTP-binding protein EngB.